The sequence spans 211 residues: Ribosomal RNA small subunit methyltransferase G (211 aa).

Residues G73, F78, 124-125 (VE), and R137 contribute to the S-adenosyl-L-methionine site.

Belongs to the methyltransferase superfamily. RNA methyltransferase RsmG family.

Its subcellular location is the cytoplasm. Its function is as follows. Specifically methylates the N7 position of a guanine in 16S rRNA. This Christiangramia forsetii (strain DSM 17595 / CGMCC 1.15422 / KT0803) (Gramella forsetii) protein is Ribosomal RNA small subunit methyltransferase G.